The chain runs to 132 residues: Small ribosomal subunit protein uS8 (132 aa).

Belongs to the universal ribosomal protein uS8 family. Part of the 30S ribosomal subunit. Contacts proteins S5 and S12.

One of the primary rRNA binding proteins, it binds directly to 16S rRNA central domain where it helps coordinate assembly of the platform of the 30S subunit. The sequence is that of Small ribosomal subunit protein uS8 from Anaplasma marginale (strain Florida).